The sequence spans 742 residues: 5-methyltetrahydropteroyltriglutamate--homocysteine methyltransferase (742 aa).

5-methyltetrahydropteroyltri-L-glutamate contacts are provided by residues 18-21 (REWK) and lysine 112. Residues 420 to 422 (IGS) and glutamate 473 contribute to the L-homocysteine site. L-methionine is bound by residues 420-422 (IGS) and glutamate 473. Tryptophan 550 is a 5-methyltetrahydropteroyltri-L-glutamate binding site. An L-homocysteine-binding site is contributed by aspartate 588. Residue aspartate 588 coordinates L-methionine. Residue glutamate 594 participates in 5-methyltetrahydropteroyltri-L-glutamate binding. 3 residues coordinate Zn(2+): histidine 630, cysteine 632, and glutamate 654. Catalysis depends on histidine 683, which acts as the Proton donor. Cysteine 715 is a Zn(2+) binding site.

The protein belongs to the vitamin-B12 independent methionine synthase family. Zn(2+) serves as cofactor.

The enzyme catalyses 5-methyltetrahydropteroyltri-L-glutamate + L-homocysteine = tetrahydropteroyltri-L-glutamate + L-methionine. The protein operates within amino-acid biosynthesis; L-methionine biosynthesis via de novo pathway; L-methionine from L-homocysteine (MetE route): step 1/1. Functionally, catalyzes the transfer of a methyl group from 5-methyltetrahydrofolate to homocysteine resulting in methionine formation. This is 5-methyltetrahydropteroyltriglutamate--homocysteine methyltransferase from Staphylococcus aureus (strain Mu3 / ATCC 700698).